We begin with the raw amino-acid sequence, 346 residues long: Melanoma-associated antigen B4 (346 aa).

Residues 1-18 (MPRGQKSKLRAREKRQRT) are compositionally biased toward basic residues. Positions 1–107 (MPRGQKSKLR…STSTERSLKD (107 aa)) are disordered. The segment covering 45 to 54 (VLRDTASSSL) has biased composition (polar residues). Low complexity predominate over residues 92-101 (ASSSQASTST). Residues 109 to 307 (LTRKTKMLVQ…NNFPLLYEEA (199 aa)) form the MAGE domain. The disordered stretch occupies residues 311-346 (EEERAGARPRVAARRGTTAMTSAYSRATSSSSSQPM). The span at 318–346 (RPRVAARRGTTAMTSAYSRATSSSSSQPM) shows a compositional bias: low complexity.

Expressed in testis.

The protein localises to the cytoplasm. The chain is Melanoma-associated antigen B4 (MAGEB4) from Homo sapiens (Human).